The following is a 353-amino-acid chain: Iron(III) enterobactin esterase (353 aa).

This sequence belongs to the Fes family.

It is found in the cytoplasm. The catalysed reaction is Fe(III)-enterobactin + 3 H2O + H(+) = Fe(III)-[N-(2,3-dihydroxybenzoyl)-L-serine] + 2 N-(2,3-dihydroxybenzoyl)-L-serine. It carries out the reaction Fe(III)-enterobactin + H2O = Fe(III)-[N-(2,3-dihydroxybenzoyl)-L-serine]3 + H(+). The enzyme catalyses Fe(III)-[N-(2,3-dihydroxybenzoyl)-L-serine]3 + H2O + H(+) = Fe(III)-[N-(2,3-dihydroxybenzoyl)-L-serine]2 + N-(2,3-dihydroxybenzoyl)-L-serine. It catalyses the reaction Fe(III)-[N-(2,3-dihydroxybenzoyl)-L-serine]2 + H2O + H(+) = Fe(III)-[N-(2,3-dihydroxybenzoyl)-L-serine] + N-(2,3-dihydroxybenzoyl)-L-serine. Its function is as follows. Catalyzes the hydrolysis of ferric enterobactin (Fe-Ent). Is responsible for the release of iron from ferric enterobactin. The chain is Iron(III) enterobactin esterase from Yersinia enterocolitica.